Consider the following 325-residue polypeptide: NADH-quinone oxidoreductase subunit H (325 aa).

8 helical membrane passes run 11–31 (ILLT…CGAF), 81–101 (FIFT…FAIV), 114–134 (IGIL…LFAG), 154–174 (VSYE…AGSF), 186–206 (MWNI…GVAV), 237–257 (FFVG…TLFF), 265–285 (LPSF…FILI), and 304–324 (ICLP…LYNA).

Belongs to the complex I subunit 1 family. As to quaternary structure, NDH-1 is composed of 13 different subunits. Subunits NuoA, H, J, K, L, M, N constitute the membrane sector of the complex.

Its subcellular location is the cell inner membrane. It carries out the reaction a quinone + NADH + 5 H(+)(in) = a quinol + NAD(+) + 4 H(+)(out). Functionally, NDH-1 shuttles electrons from NADH, via FMN and iron-sulfur (Fe-S) centers, to quinones in the respiratory chain. The immediate electron acceptor for the enzyme in this species is believed to be ubiquinone. Couples the redox reaction to proton translocation (for every two electrons transferred, four hydrogen ions are translocated across the cytoplasmic membrane), and thus conserves the redox energy in a proton gradient. This subunit may bind ubiquinone. The sequence is that of NADH-quinone oxidoreductase subunit H from Proteus mirabilis (strain HI4320).